A 115-amino-acid polypeptide reads, in one-letter code: Large ribosomal subunit protein bL20 (115 aa).

The protein belongs to the bacterial ribosomal protein bL20 family.

Functionally, binds directly to 23S ribosomal RNA and is necessary for the in vitro assembly process of the 50S ribosomal subunit. It is not involved in the protein synthesizing functions of that subunit. This is Large ribosomal subunit protein bL20 from Prochlorococcus marinus (strain MIT 9312).